A 681-amino-acid polypeptide reads, in one-letter code: Chaperone protein HtpG (681 aa).

The tract at residues 1–326 (MQKGNIGVTT…SPDIPLNVSR (326 aa)) is a; substrate-binding. The segment at 327 to 545 (SYLQSDSNVK…YMRRMKEMAN (219 aa)) is b. The c stretch occupies residues 546 to 681 (IQAGMSFYGE…NFVKRSIELI (136 aa)). A disordered region spans residues 601–620 (DALKKKQEGKKDEDIPTAEK).

The protein belongs to the heat shock protein 90 family. In terms of assembly, homodimer.

It is found in the cytoplasm. Functionally, molecular chaperone. Has ATPase activity. The protein is Chaperone protein HtpG of Bacteroides fragilis (strain ATCC 25285 / DSM 2151 / CCUG 4856 / JCM 11019 / LMG 10263 / NCTC 9343 / Onslow / VPI 2553 / EN-2).